We begin with the raw amino-acid sequence, 102 residues long: Integration host factor subunit beta (102 aa).

This sequence belongs to the bacterial histone-like protein family. In terms of assembly, heterodimer of an alpha and a beta chain.

In terms of biological role, this protein is one of the two subunits of integration host factor, a specific DNA-binding protein that functions in genetic recombination as well as in transcriptional and translational control. The sequence is that of Integration host factor subunit beta from Marinomonas sp. (strain MWYL1).